A 273-amino-acid polypeptide reads, in one-letter code: Nucleotide-binding protein TT_C1664 (273 aa).

8-15 (GLSGAGKT) provides a ligand contact to ATP. 57–60 (DARA) serves as a coordination point for GTP.

The protein belongs to the RapZ-like family.

In terms of biological role, displays ATPase and GTPase activities. This Thermus thermophilus (strain ATCC BAA-163 / DSM 7039 / HB27) protein is Nucleotide-binding protein TT_C1664.